The following is a 139-amino-acid chain: D-ribose pyranase (139 aa).

H20 serves as the catalytic Proton donor. Substrate contacts are provided by residues D28, H106, and 128 to 130 (YAN).

The protein belongs to the RbsD / FucU family. RbsD subfamily. In terms of assembly, homodecamer.

The protein localises to the cytoplasm. The catalysed reaction is beta-D-ribopyranose = beta-D-ribofuranose. The protein operates within carbohydrate metabolism; D-ribose degradation; D-ribose 5-phosphate from beta-D-ribopyranose: step 1/2. Catalyzes the interconversion of beta-pyran and beta-furan forms of D-ribose. In Pectobacterium carotovorum subsp. carotovorum (strain PC1), this protein is D-ribose pyranase.